A 357-amino-acid polypeptide reads, in one-letter code: Sorbitol dehydrogenase (357 aa).

N-acetylalanine is present on A2. Residue C45 coordinates Zn(2+). Residue Y51 participates in substrate binding. H70 and E71 together coordinate Zn(2+). E156 contributes to the substrate binding site. S169 is subject to Phosphoserine. Residues V184, D204, R209, 273-275, and 297-299 contribute to the NAD(+) site; these read VGM and VFR. Positions 299 and 300 each coordinate substrate.

Belongs to the zinc-containing alcohol dehydrogenase family. In terms of assembly, homotetramer. Requires Zn(2+) as cofactor. In terms of tissue distribution, testis has the highest level of expression, followed by kidney, liver, and lung. Low levels of expression are also observed in lens, brain, and skeletal muscle. Expressed in sperm flagellum and very low expression in the sperm head.

The protein resides in the mitochondrion membrane. Its subcellular location is the cell projection. It localises to the cilium. It is found in the flagellum. It carries out the reaction keto-D-fructose + NADH + H(+) = D-sorbitol + NAD(+). The catalysed reaction is xylitol + NAD(+) = D-xylulose + NADH + H(+). It catalyses the reaction L-iditol + NAD(+) = keto-L-sorbose + NADH + H(+). Inhibited in vitro by p-hydroxymercuribenzoate, EDTA, l,l0-phenanthroline and N-ethylmaleimide. Its function is as follows. Polyol dehydrogenase that catalyzes the reversible NAD(+)-dependent oxidation of various sugar alcohols. Is active with D-sorbitol (D-glucitol) leading to the C2-oxidized product D-fructose. Is a key enzyme in the polyol pathway that interconverts glucose and fructose via sorbitol, which constitutes an important alternate route for glucose metabolism. May play a role in sperm motility by using sorbitol as an alternative energy source for sperm motility and protein tyrosine phosphorylation. Has no activity on ethanol. Cannot use NADP(+) as the electron acceptor. This Mus musculus (Mouse) protein is Sorbitol dehydrogenase (Sord).